A 302-amino-acid polypeptide reads, in one-letter code: Rhomboid-related protein 2 (302 aa).

A disordered region spans residues methionine 1–phenylalanine 38. Basic and acidic residues predominate over residues methionine 16–phenylalanine 38. 7 consecutive transmembrane segments (helical) span residues proline 71–tryptophan 91, leucine 127–isoleucine 147, valine 158–proline 178, leucine 182–valine 202, phenylalanine 211–leucine 231, valine 244–phenylalanine 264, and phenylalanine 277–phenylalanine 297. Serine 186 functions as the Nucleophile in the catalytic mechanism. The active site involves histidine 249.

It belongs to the peptidase S54 family. In terms of processing, proteolytic processing of the proenzyme produces an N- and a C-terminal fragment. The processing is required for activation of the protease.

The protein localises to the cell membrane. It catalyses the reaction Cleaves type-1 transmembrane domains using a catalytic dyad composed of serine and histidine that are contributed by different transmembrane domains.. Functionally, involved in regulated intramembrane proteolysis and the subsequent release of functional polypeptides from their membrane anchors. Known substrate: EFNB3. The polypeptide is Rhomboid-related protein 2 (Rhbdl2) (Mus musculus (Mouse)).